A 352-amino-acid polypeptide reads, in one-letter code: Holliday junction branch migration complex subunit RuvB (352 aa).

A large ATPase domain (RuvB-L) region spans residues 13–201 (FSLRKKELRL…FGISQKIEFY (189 aa)). Residues Arg-41, Gly-82, Lys-85, Thr-86, Thr-87, 148 to 150 (EDF), Arg-191, Tyr-201, and Arg-238 each bind ATP. Thr-86 lines the Mg(2+) pocket. The tract at residues 202 to 273 (TCDELKQIID…LIKKALNSYQ (72 aa)) is small ATPAse domain (RuvB-S). The segment at 276-352 (EKGLDYVDRQ…KYIDSKNDNF (77 aa)) is head domain (RuvB-H). DNA is bound by residues Arg-330 and Arg-335.

This sequence belongs to the RuvB family. As to quaternary structure, homohexamer. Forms an RuvA(8)-RuvB(12)-Holliday junction (HJ) complex. HJ DNA is sandwiched between 2 RuvA tetramers; dsDNA enters through RuvA and exits via RuvB. An RuvB hexamer assembles on each DNA strand where it exits the tetramer. Each RuvB hexamer is contacted by two RuvA subunits (via domain III) on 2 adjacent RuvB subunits; this complex drives branch migration. In the full resolvosome a probable DNA-RuvA(4)-RuvB(12)-RuvC(2) complex forms which resolves the HJ.

It localises to the cytoplasm. It catalyses the reaction ATP + H2O = ADP + phosphate + H(+). Functionally, the RuvA-RuvB-RuvC complex processes Holliday junction (HJ) DNA during genetic recombination and DNA repair, while the RuvA-RuvB complex plays an important role in the rescue of blocked DNA replication forks via replication fork reversal (RFR). RuvA specifically binds to HJ cruciform DNA, conferring on it an open structure. The RuvB hexamer acts as an ATP-dependent pump, pulling dsDNA into and through the RuvAB complex. RuvB forms 2 homohexamers on either side of HJ DNA bound by 1 or 2 RuvA tetramers; 4 subunits per hexamer contact DNA at a time. Coordinated motions by a converter formed by DNA-disengaged RuvB subunits stimulates ATP hydrolysis and nucleotide exchange. Immobilization of the converter enables RuvB to convert the ATP-contained energy into a lever motion, pulling 2 nucleotides of DNA out of the RuvA tetramer per ATP hydrolyzed, thus driving DNA branch migration. The RuvB motors rotate together with the DNA substrate, which together with the progressing nucleotide cycle form the mechanistic basis for DNA recombination by continuous HJ branch migration. Branch migration allows RuvC to scan DNA until it finds its consensus sequence, where it cleaves and resolves cruciform DNA. In Prochlorococcus marinus (strain MIT 9312), this protein is Holliday junction branch migration complex subunit RuvB.